The chain runs to 353 residues: Photosystem II protein D1 (353 aa).

Threonine 2 bears the N-acetylthreonine mark. Position 2 is a phosphothreonine (threonine 2). 3 helical membrane-spanning segments follow: residues 29-46 (YIGW…TATS), 118-133 (HFLL…EWEL), and 142-156 (WIAV…AATA). Residue histidine 118 participates in chlorophyll a binding. Tyrosine 126 provides a ligand contact to pheophytin a. Aspartate 170 and glutamate 189 together coordinate [CaMn4O5] cluster. A helical membrane pass occupies residues 197–218 (FHMLGVAGVFGGSLFSAMHGSL). Position 198 (histidine 198) interacts with chlorophyll a. A quinone contacts are provided by residues histidine 215 and 264–265 (SF). Histidine 215 contributes to the Fe cation binding site. Residue histidine 272 participates in Fe cation binding. Residues 274–288 (FLAAWPVVGIWFTAL) form a helical membrane-spanning segment. [CaMn4O5] cluster contacts are provided by histidine 332, glutamate 333, aspartate 342, and alanine 344. The propeptide occupies 345-353 (GVEVPSTNG).

It belongs to the reaction center PufL/M/PsbA/D family. As to quaternary structure, PSII is composed of 1 copy each of membrane proteins PsbA, PsbB, PsbC, PsbD, PsbE, PsbF, PsbH, PsbI, PsbJ, PsbK, PsbL, PsbM, PsbT, PsbX, PsbY, PsbZ, Psb30/Ycf12, at least 3 peripheral proteins of the oxygen-evolving complex and a large number of cofactors. It forms dimeric complexes. The D1/D2 heterodimer binds P680, chlorophylls that are the primary electron donor of PSII, and subsequent electron acceptors. It shares a non-heme iron and each subunit binds pheophytin, quinone, additional chlorophylls, carotenoids and lipids. D1 provides most of the ligands for the Mn4-Ca-O5 cluster of the oxygen-evolving complex (OEC). There is also a Cl(-1) ion associated with D1 and D2, which is required for oxygen evolution. The PSII complex binds additional chlorophylls, carotenoids and specific lipids. is required as a cofactor. In terms of processing, tyr-161 forms a radical intermediate that is referred to as redox-active TyrZ, YZ or Y-Z. C-terminally processed by CTPA; processing is essential to allow assembly of the oxygen-evolving complex and thus photosynthetic growth.

Its subcellular location is the plastid. The protein resides in the chloroplast thylakoid membrane. It carries out the reaction 2 a plastoquinone + 4 hnu + 2 H2O = 2 a plastoquinol + O2. Photosystem II (PSII) is a light-driven water:plastoquinone oxidoreductase that uses light energy to abstract electrons from H(2)O, generating O(2) and a proton gradient subsequently used for ATP formation. It consists of a core antenna complex that captures photons, and an electron transfer chain that converts photonic excitation into a charge separation. The D1/D2 (PsbA/PsbD) reaction center heterodimer binds P680, the primary electron donor of PSII as well as several subsequent electron acceptors. This chain is Photosystem II protein D1, found in Morus indica (Mulberry).